The primary structure comprises 257 residues: Imidazole glycerol phosphate synthase subunit HisF (257 aa).

Active-site residues include Asp12 and Asp131.

It belongs to the HisA/HisF family. Heterodimer of HisH and HisF.

The protein localises to the cytoplasm. It carries out the reaction 5-[(5-phospho-1-deoxy-D-ribulos-1-ylimino)methylamino]-1-(5-phospho-beta-D-ribosyl)imidazole-4-carboxamide + L-glutamine = D-erythro-1-(imidazol-4-yl)glycerol 3-phosphate + 5-amino-1-(5-phospho-beta-D-ribosyl)imidazole-4-carboxamide + L-glutamate + H(+). It participates in amino-acid biosynthesis; L-histidine biosynthesis; L-histidine from 5-phospho-alpha-D-ribose 1-diphosphate: step 5/9. IGPS catalyzes the conversion of PRFAR and glutamine to IGP, AICAR and glutamate. The HisF subunit catalyzes the cyclization activity that produces IGP and AICAR from PRFAR using the ammonia provided by the HisH subunit. The polypeptide is Imidazole glycerol phosphate synthase subunit HisF (Paraburkholderia xenovorans (strain LB400)).